An 898-amino-acid chain; its full sequence is MSLQKLENYSNKSVVQEEVLILTELLEDITKNMLAPETFEKIIQLKELSTQEDYQGLNRLVTSLSNDEMVYISRYFSILPLLINISEDVDLAYEINHQNNIDQDYLGKLSTTIKLVAEKENAVEILEHLNVVPVLTAHPTQVQRKSMLDLTNHIHSLLRKYRDVKLGLINKDKWYNDLRRYIEIIMQTDMIREKKLKVTNEITNAMEYYNSSFLKAVPHLTTEYKRLAQAHGLNLKQAKPITMGMWIGGDRDGNPFVTAKTLKQSALTQCEVIMNYYDKKIYQLYREFSLSTSIVNVSKQVREMARQSKDNSIYREKELYRRALFDIQSKIQATKTYLIEDEEVGTRYETANDFYKDLIAIRDSLLENKGESLISGDFVELLQAVEIFGFYLASIDMRQDSSVYEACVAELLKSAGIHSRYSELSEEEKCDLLLKELEEDPRILSATHAEKSELLAKELAIFKTARVLKDKLGDDVIRQTIISHATSLSDMLELAILLKEVGLVDTERARVQIVPLFETIEDLDHSEETMRKYLSLSLAKKWIDSRNNYQEIMLGYSDSNKDGGYLSSCWTLYKAQQQLTAIGDEFGVKVTFFHGRGGTVGRGGGPTYEAITSQPLKSIKDRIRLTEQGEVIGNKYGNKDAAYYNLEMLVSAAINRMITQKKSDTNTPNRYETIMDQVVDRSYDIYRDLVFGNEHFYDYFFESSPIKAISSFNIGSRPAARKTITEIGGLRAIPWVFSWSQSRVMFPGWYGVGSSFKEFINKNPENIAILRDMYQNWPFFQSLLSNVDMVLSKSNMNIAFEYAKLCEDEQVKAIYETILNEWQVTKNVILAIEGHDELLADNPYLKASLDYRMPYFNILNYIQLELIKRQRRGELSSDQERLIHITINGIATGLRNSG.

Residues histidine 138 and lysine 561 contribute to the active site.

This sequence belongs to the PEPCase type 1 family. Mg(2+) serves as cofactor.

The enzyme catalyses oxaloacetate + phosphate = phosphoenolpyruvate + hydrogencarbonate. Its function is as follows. Forms oxaloacetate, a four-carbon dicarboxylic acid source for the tricarboxylic acid cycle. The polypeptide is Phosphoenolpyruvate carboxylase (Streptococcus pneumoniae serotype 4 (strain ATCC BAA-334 / TIGR4)).